A 596-amino-acid chain; its full sequence is Fumarate reductase (cytochrome) (596 aa).

An N-terminal signal peptide occupies residues 1–25 (MKKMNLAVCIATLMGTAGLMGTAVA). Residues His-33, Cys-39, Cys-42, His-43, Cys-61, Cys-64, His-65, His-83, His-86, Cys-93, Cys-96, His-97, Ala-99, His-100, Cys-107, Cys-110, and His-111 each contribute to the heme c site. The interval 143–596 (ALASAPHDTV…EEAAKYSKKN (454 aa)) is flavoprotein-like. FAD-binding residues include Ala-162, Glu-181, Asn-189, Ala-194, Gly-195, Gly-196, Gly-303, and Asp-369. Gly-195 lines the fumarate pocket. Succinate is bound at residue Gly-195. Tyr-386 is a binding site for heme c. Succinate-binding residues include His-390, Thr-402, and Glu-403. Residues Thr-402 and Glu-403 each contribute to the fumarate site. Arg-427 functions as the Proton donor in the catalytic mechanism. Residue His-529 participates in fumarate binding. Succinate is bound at residue His-529. FAD-binding residues include His-530 and Glu-559. 2 residues coordinate fumarate: Arg-569 and Gly-572. Succinate is bound by residues Arg-569 and Gly-572. 2 residues coordinate FAD: Ala-574 and Ile-575.

It in the C-terminal section; belongs to the FAD-dependent oxidoreductase 2 family. FRD/SDH subfamily. Monomer. FAD serves as cofactor. Requires heme c as cofactor.

Its subcellular location is the periplasm. It carries out the reaction 2 Fe(III)-[cytochrome c] + succinate = fumarate + 2 Fe(II)-[cytochrome c] + 2 H(+). Its activity is regulated as follows. Mesaconic acid is a competitive inhibitor of fumarate reduction. Its function is as follows. Flavocytochrome that catalyzes the reduction of fumarate to succinate. Is essential for fumarate respiration during anaerobic growth, acting as the terminal reductase. Receives electrons from the membrane-bound tetraheme c-type cytochrome CymA. Is essentially unidirectional, catalyzing only fumarate reduction. Cannot reduce nitrite, dimethylsulphoxide, trimethylamine-N-oxide (TMAO) or sulfite. In vitro, can use the artificial electron donor methyl viologen. In Shewanella frigidimarina (strain NCIMB 400), this protein is Fumarate reductase (cytochrome).